The primary structure comprises 498 residues: ATP synthase subunit beta, chloroplastic (498 aa).

172–179 (GGAGVGKT) lines the ATP pocket.

It belongs to the ATPase alpha/beta chains family. In terms of assembly, F-type ATPases have 2 components, CF(1) - the catalytic core - and CF(0) - the membrane proton channel. CF(1) has five subunits: alpha(3), beta(3), gamma(1), delta(1), epsilon(1). CF(0) has four main subunits: a(1), b(1), b'(1) and c(9-12).

The protein localises to the plastid. It is found in the chloroplast thylakoid membrane. The catalysed reaction is ATP + H2O + 4 H(+)(in) = ADP + phosphate + 5 H(+)(out). Its function is as follows. Produces ATP from ADP in the presence of a proton gradient across the membrane. The catalytic sites are hosted primarily by the beta subunits. The polypeptide is ATP synthase subunit beta, chloroplastic (Beta vulgaris (Sugar beet)).